Consider the following 631-residue polypeptide: Myotonin-protein kinase (631 aa).

At 1 to 592 the chain is on the cytoplasmic side; it reads MSAEVRLRQL…PRPGLSEARC (592 aa). One can recognise a Protein kinase domain in the interval 71 to 339; sequence FEILKVIGRG…AGDFQKHPFF (269 aa). ATP is bound by residues 77–85 and K100; that span reads IGRGAFSEV. D195 (proton acceptor) is an active-site residue. 2 positions are modified to phosphoserine; by autocatalysis: S216 and S228. T234 bears the Phosphothreonine; by autocatalysis mark. An AGC-kinase C-terminal domain is found at 340–415; it reads FGLDWEGLRD…CCMAFRDNQV (76 aa). A coiled-coil region spans residues 464–532; sequence AETTVTLQQL…QERMEMLQAP (69 aa). A helical; Anchor for type IV membrane protein transmembrane segment spans residues 593–613; the sequence is LLLFAAALAAAATLGCTGLVA. At 614-631 the chain is on the lumenal side; sequence YTGGLTPVWCFPGATFAP.

It belongs to the protein kinase superfamily. AGC Ser/Thr protein kinase family. DMPK subfamily. In terms of assembly, homodimer; homodimerization stimulates the kinase activity. Interacts with HSPB2; may enhance DMPK kinase activity. Interacts with PLN; phosphorylates PLN. May interact with RAC1; may regulate DMPK kinase activity. Interacts with LMNA; may regulate nuclear envelope stability. The cofactor is Mg(2+). In terms of processing, phosphorylated. Autophosphorylates. Phosphorylation by RAF1 may result in activation of DMPK. Proteolytic processing of the C-terminus may remove the transmembrane domain and release the kinase from membranes stimulating its activity. As to expression, expressed in all tissues tested, with a predominance in brain, skeletal muscle, heart, and other tissues containing smooth muscle. In the heart, expression is restricted to the cardiomyocytes in the ventricle and atrium.

It localises to the sarcoplasmic reticulum membrane. It is found in the cell membrane. The protein localises to the endoplasmic reticulum membrane. Its subcellular location is the nucleus outer membrane. The protein resides in the mitochondrion outer membrane. It localises to the cytoplasm. It is found in the cytosol. It catalyses the reaction L-seryl-[protein] + ATP = O-phospho-L-seryl-[protein] + ADP + H(+). The enzyme catalyses L-threonyl-[protein] + ATP = O-phospho-L-threonyl-[protein] + ADP + H(+). With respect to regulation, coiled-coil-mediated oligomerization enhances the catalytic activity. Proteolytic processing of the C-terminus may release the protein from membranes and constitute a mean to regulate the enzyme. May be regulated by HSPB2, RAC1, RAF1 and G-protein second messengers. Functionally, non-receptor serine/threonine protein kinase which is necessary for the maintenance of skeletal muscle structure and function. May play a role in myocyte differentiation and survival by regulating the integrity of the nuclear envelope and the expression of muscle-specific genes. May also phosphorylate PPP1R12A and inhibit the myosin phosphatase activity to regulate myosin phosphorylation. Also critical to the modulation of cardiac contractility and to the maintenance of proper cardiac conduction activity probably through the regulation of cellular calcium homeostasis. Phosphorylates PLN, a regulator of calcium pumps and may regulate sarcoplasmic reticulum calcium uptake in myocytes. May also phosphorylate FXYD1/PLM which is able to induce chloride currents. May also play a role in synaptic plasticity. The sequence is that of Myotonin-protein kinase (Dmpk) from Mus musculus (Mouse).